The following is a 539-amino-acid chain: MPIEIVCKIKFAEEDAKPKEKEAGDEQSLLGAVAPGAAPRDLATFASTSTLHGLGRACGPGPHGLRRTLWALALLTSLAAFLYQAAGLARGYLTRPHLVAMDPAAPAPVAGFPAVTLCNINRFRHSALSDADIFHLANLTGLPPKDRDGHRAAGLRYPEPDMVDILNRTGHQLADMLKSCNFSGHHCSASNFSVVYTRYGKCYTFNADPRSSLPSRAGGMGSGLEIMLDIQQEEYLPIWRETNETSFEAGIRVQIHSQEEPPYIHQLGFGVSPGFQTFVSCQEQRLTYLPQPWGNCRAESELREPELQGYSAYSVSACRLRCEKEAVLQRCHCRMVHMPGNETICPPNIYIECADHTLDSLGGGPEGPCFCPTPCNLTRYGKEISMVRIPNRGSARYLARKYNRNETYIRENFLVLDVFFEALTSEAMEQRAAYGLSALLGDLGGQMGLFIGASILTLLEILDYIYEVSWDRLKRVWRRPKTPLRTSTGGISTLGLQELKEQSPCPSRGRVEGGGVSSLLPNHHHPHGPPGGLFEDFAC.

Residues 1 to 68 are Cytoplasmic-facing; that stretch reads MPIEIVCKIK…GPGPHGLRRT (68 aa). A helical membrane pass occupies residues 69–89; it reads LWALALLTSLAAFLYQAAGLA. The Extracellular segment spans residues 90–438; it reads RGYLTRPHLV…EQRAAYGLSA (349 aa). Cystine bridges form between C118–C202 and C180–C187. Residues N191 and N243 are each glycosylated (N-linked (GlcNAc...) asparagine). 5 disulfides stabilise this stretch: C296–C375, C318–C371, C322–C369, C331–C353, and C333–C345. N376 is a glycosylation site (N-linked (GlcNAc...) asparagine). A helical membrane pass occupies residues 439-459; the sequence is LLGDLGGQMGLFIGASILTLL. Residues 452–454 carry the GAS motif; ion selectivity filter motif; that stretch reads GAS. At 460–539 the chain is on the cytoplasmic side; it reads EILDYIYEVS…PGGLFEDFAC (80 aa). Residues 501–531 form a disordered region; that stretch reads EQSPCPSRGRVEGGGVSSLLPNHHHPHGPPG.

The protein belongs to the amiloride-sensitive sodium channel (TC 1.A.6) family. ASIC4 subfamily. In terms of assembly, homotrimer. Heterotrimer; with other ASIC proteins producing functional channels. As to expression, expressed in pituitary gland. Weakly expressed in brain, vestibular system and organ of Corti.

The protein resides in the cell membrane. Does not exhibit measurable stand-alone pH-gated sodium channel activity but may form pH-gated heterotrimeric sodium channels. Its activity could also depend on alternative gating mechanisms. This chain is Acid-sensing ion channel 4, found in Homo sapiens (Human).